We begin with the raw amino-acid sequence, 1216 residues long: DNA polymerase subunit gamma-1 (1216 aa).

Over residues 27 to 37 (SSSVLDPVPSD) the composition is skewed to low complexity. The disordered stretch occupies residues 27–50 (SSSVLDPVPSDGQPQSQMPSSENG). Over residues 38–50 (GQPQSQMPSSENG) the composition is skewed to polar residues. The Exo I motif lies at 179–183 (VFDVE). Catalysis depends on D181, which acts as the Exonuclease activity. The short motif at 250–258 (VGHNVSFDR) is the Exo II element. S289 is a binding site for DNA. The span at 301–314 (GKHKTQHPTKRGQK) shows a compositional bias: basic residues. The tract at residues 301–321 (GKHKTQHPTKRGQKSQKNANG) is disordered. Positions 377-385 (YCARDVWAT) match the Exo III motif. The interval 488-518 (TASASKLPIEGAGPFGDPMDQEDPGPPSEEE) is disordered. The segment at 491 to 552 (ASKLPIEGAG…RPQHLPGHPG (62 aa)) is accessory-interacting determinant. Over residues 506-518 (MDQEDPGPPSEEE) the composition is skewed to acidic residues. R560 contacts RNA. S574 is a binding site for DNA. RNA contacts are provided by H731, G740, and K745. Residues K783 and T826 each coordinate DNA. The tract at residues 835 to 841 (TWLTASN) is trigger loop. RNA contacts are provided by S840 and R846. A Pol A motif is present at residues 864–873 (VGADVDSQEL). The a 2'-deoxyribonucleoside 5'-triphosphate site is built by D867, V868, S870, E872, R920, K924, and Y928. Mg(2+) is bound by residues D867 and V868. A Pol B motif is present at residues 920-935 (REHAKVFNYGRIYGAG). Residues T1071 and S1072 each contribute to the DNA site. The short motif at 1111–1118 (HDEVRYLV) is the Pol C element. D1112 provides a ligand contact to a 2'-deoxyribonucleoside 5'-triphosphate. Position 1112 (D1112) interacts with Mg(2+).

This sequence belongs to the DNA polymerase type-A family. In terms of assembly, heterotrimer composed of a catalytic subunit and a homodimer of accessory subunits (POLG:POLG2). Interacts with TTC3. Interacts with LIG3. Requires Mg(2+) as cofactor.

It is found in the mitochondrion. Its subcellular location is the mitochondrion matrix. The protein localises to the mitochondrion nucleoid. It carries out the reaction DNA(n) + a 2'-deoxyribonucleoside 5'-triphosphate = DNA(n+1) + diphosphate. The enzyme catalyses a 3'-end 2'-deoxyribonucleotidyl-deoxyribonucleotide-DNA + H2O = a 3'-end 2'-deoxyribonucleotide-DNA + a 2'-deoxyribonucleoside 5'-phosphate + H(+). The catalysed reaction is a 5'-end 2'-deoxyribose-2'-deoxyribonucleotide-DNA = (2E,4S)-4-hydroxypenten-2-al-5-phosphate + a 5'-end 5'-phospho-2'-deoxyribonucleoside-DNA + H(+). With respect to regulation, inhibited by dideoxynucleotides such as antiviral agent zalcitabine. In terms of biological role, catalytic subunit of DNA polymerase gamma solely responsible for replication of mitochondrial DNA (mtDNA). Replicates both heavy and light strands of the circular mtDNA genome using a single-stranded DNA template, RNA primers and the four deoxyribonucleoside triphosphates as substrates. Has 5' -&gt; 3' polymerase activity. Functionally interacts with TWNK and SSBP1 at the replication fork to form a highly processive replisome, where TWNK unwinds the double-stranded DNA template prior to replication and SSBP1 covers the parental heavy strand to enable continuous replication of the entire mitochondrial genome. A single nucleotide incorporation cycle includes binding of the incoming nucleotide at the insertion site, a phosphodiester bond formation reaction that extends the 3'-end of the primer DNA, and translocation of the primer terminus to the post-insertion site. After completing replication of a mtDNA strand, mediates 3' -&gt; 5' exonucleolytic degradation at the nick to enable proper ligation. Highly accurate due to high nucleotide selectivity and 3' -&gt; 5' exonucleolytic proofreading. Proficiently corrects base substitutions, single-base additions and deletions in non-repetitive sequences and short repeats, but displays lower proofreading activity when replicating longer homopolymeric stretches. Exerts exonuclease activity toward single-stranded DNA and double-stranded DNA containing 3'-terminal mispairs. When a misincorporation occurs, transitions from replication to a pro-nucleolytic editing mode and removes the missincorporated nucleoside in the exonuclease active site. Proceeds via an SN2 nucleolytic mechanism in which Asp-198 catalyzes phosphodiester bond hydrolysis and Glu-200 stabilizes the leaving group. As a result the primer strand becomes one nucleotide shorter and is positioned in the post-insertion site, ready to resume DNA synthesis. Exerts 5'-deoxyribose phosphate (dRP) lyase activity and mediates repair-associated mtDNA synthesis (gap filling) in base-excision repair pathway. Catalyzes the release of the 5'-terminal 2-deoxyribose-5-phosphate sugar moiety from incised apurinic/apyrimidinic (AP) sites to produce a substrate for DNA ligase. The dRP lyase reaction does not require divalent metal ions and likely proceeds via a Schiff base intermediate in a beta-elimination reaction mechanism. This is DNA polymerase subunit gamma-1 from Rattus norvegicus (Rat).